Consider the following 135-residue polypeptide: Ribonuclease VapC35 (135 aa).

The region spanning 2-123 (IYLETSALVK…DNRLKEAAEA (122 aa)) is the PINc domain. Mg(2+)-binding residues include Glu-5 and Asp-91.

The protein belongs to the PINc/VapC protein family. Requires Mg(2+) as cofactor.

Its function is as follows. Toxic component of a type II toxin-antitoxin (TA) system. An RNase. Its toxic effect is neutralized by coexpression with cognate antitoxin VapB35. The protein is Ribonuclease VapC35 of Mycobacterium tuberculosis (strain CDC 1551 / Oshkosh).